The following is a 172-amino-acid chain: Protein-export protein SecB (172 aa).

A disordered region spans residues 1-22 (MADETSADINNPALQPNGEDTS). Positions 7 to 20 (ADINNPALQPNGED) are enriched in polar residues.

This sequence belongs to the SecB family. In terms of assembly, homotetramer, a dimer of dimers. One homotetramer interacts with 1 SecA dimer.

Its subcellular location is the cytoplasm. Functionally, one of the proteins required for the normal export of preproteins out of the cell cytoplasm. It is a molecular chaperone that binds to a subset of precursor proteins, maintaining them in a translocation-competent state. It also specifically binds to its receptor SecA. The sequence is that of Protein-export protein SecB from Sphingopyxis alaskensis (strain DSM 13593 / LMG 18877 / RB2256) (Sphingomonas alaskensis).